A 243-amino-acid chain; its full sequence is Pyridoxine 5'-phosphate synthase (243 aa).

Position 9 (Asn-9) interacts with 3-amino-2-oxopropyl phosphate. 11-12 contributes to the 1-deoxy-D-xylulose 5-phosphate binding site; it reads DH. Arg-20 contributes to the 3-amino-2-oxopropyl phosphate binding site. His-45 functions as the Proton acceptor in the catalytic mechanism. 1-deoxy-D-xylulose 5-phosphate-binding residues include Arg-47 and His-52. Glu-72 serves as the catalytic Proton acceptor. Residue Thr-102 participates in 1-deoxy-D-xylulose 5-phosphate binding. The Proton donor role is filled by His-193. 3-amino-2-oxopropyl phosphate contacts are provided by residues Gly-194 and 215–216; that span reads GH.

The protein belongs to the PNP synthase family. In terms of assembly, homooctamer; tetramer of dimers.

Its subcellular location is the cytoplasm. The enzyme catalyses 3-amino-2-oxopropyl phosphate + 1-deoxy-D-xylulose 5-phosphate = pyridoxine 5'-phosphate + phosphate + 2 H2O + H(+). It participates in cofactor biosynthesis; pyridoxine 5'-phosphate biosynthesis; pyridoxine 5'-phosphate from D-erythrose 4-phosphate: step 5/5. Catalyzes the complicated ring closure reaction between the two acyclic compounds 1-deoxy-D-xylulose-5-phosphate (DXP) and 3-amino-2-oxopropyl phosphate (1-amino-acetone-3-phosphate or AAP) to form pyridoxine 5'-phosphate (PNP) and inorganic phosphate. The polypeptide is Pyridoxine 5'-phosphate synthase (Shigella boydii serotype 4 (strain Sb227)).